The following is a 156-amino-acid chain: Calmodulin (156 aa).

S2 is modified (N-acetylserine). EF-hand domains are found at residues 15–50 (EQIA…LGQN), 51–86 (PTEA…KMKD), 88–123 (DSEE…LGEK), and 124–156 (LTDE…MTSK). Ca(2+) is bound by residues D28, D30, D32, T34, E39, D64, D66, N68, T70, E75, D101, D103, N105, and E112. The residue at position 123 (K123) is an N6,N6,N6-trimethyllysine. D137, D139, D141, Q143, and E148 together coordinate Ca(2+).

The protein belongs to the calmodulin family.

Functionally, calmodulin mediates the control of a large number of enzymes, ion channels and other proteins by Ca(2+). Among the enzymes to be stimulated by the calmodulin-Ca(2+) complex are a number of protein kinases and phosphatases. This Strongylocentrotus intermedius (Sea urchin) protein is Calmodulin.